We begin with the raw amino-acid sequence, 215 residues long: 3-demethoxyubiquinol 3-hydroxylase (215 aa).

Fe cation contacts are provided by glutamate 64, glutamate 94, histidine 97, glutamate 146, glutamate 178, and histidine 181.

This sequence belongs to the COQ7 family. The cofactor is Fe cation.

Its subcellular location is the cell membrane. The catalysed reaction is a 5-methoxy-2-methyl-3-(all-trans-polyprenyl)benzene-1,4-diol + AH2 + O2 = a 3-demethylubiquinol + A + H2O. The protein operates within cofactor biosynthesis; ubiquinone biosynthesis. Catalyzes the hydroxylation of 2-nonaprenyl-3-methyl-6-methoxy-1,4-benzoquinol during ubiquinone biosynthesis. This is 3-demethoxyubiquinol 3-hydroxylase from Coxiella burnetii (strain Dugway 5J108-111).